A 220-amino-acid chain; its full sequence is Putative vesicle-associated membrane protein 726 (220 aa).

Topologically, residues 1 to 196 are cytoplasmic; the sequence is MGQQSLIYSF…LWFENMKIKL (196 aa). The Longin domain occupies 10–114; the sequence is FVARGTVILA…SLNKEFGSKL (105 aa). The 61-residue stretch at 130–190 folds into the v-SNARE coiled-coil homology domain; that stretch reads KLSKVKAQVT…TKMKRKLWFE (61 aa). The chain crosses the membrane as a helical; Anchor for type IV membrane protein span at residues 197-217; it reads IVFGIIVALILIIILSVCHGF. At 218–220 the chain is on the vesicular side; it reads KCT.

The protein belongs to the synaptobrevin family. Expressed in flowers, leaves, stems and roots.

Its subcellular location is the cell membrane. It is found in the early endosome membrane. Functionally, involved in the targeting and/or fusion of transport vesicles to their target membrane. In Arabidopsis thaliana (Mouse-ear cress), this protein is Putative vesicle-associated membrane protein 726 (VAMP726).